A 313-amino-acid polypeptide reads, in one-letter code: MNQLSFLLFLIATTRGWSTDEANTYFKEWTCSSSPSLPRSCKEIKDECPSAFDGLYFLRTENGVIYQTFCDMTSGGGGWTLVASVHENDMRGKCTVGDRWSSQQGSKAVYPEGDGNWANYNTFGSAEAATSDDYKNPGYYDIQAKDLGIWHVPNKSPMQHWRNSSLLRYRTDTGFLQTLGHNLFGIYQKYPVKYGEGKCWTDNGPVIPVVYDFGDAQKTASYYSPYGQREFTAGFVQFRVFNNERAANALCAGMRVTGCNTEHHCIGGGGYFPEASPQQCGDFSGFDWSGYGTHVGYSSSREITEAAVLLFYR.

The signal sequence occupies residues 1–18; that stretch reads MNQLSFLLFLIATTRGWS. The region spanning 32-255 is the Fibrinogen C-terminal domain; that stretch reads SSSPSLPRSC…AANALCAGMR (224 aa). Residues Cys41 and Cys70 are joined by a disulfide bond. Residues His86, Glu87, Asp89, Gly92, Gly97, Asp98, and Asp133 each contribute to the Ca(2+) site. Cystine bridges form between Cys94-Cys280, Cys199-Cys259, and Cys251-Cys265. An N-linked (GlcNAc...) asparagine glycan is attached at Asn163. 4 residues coordinate Ca(2+): Asn260, Glu262, Glu274, and Asp282. Residues 262–263 and Glu274 each bind a carbohydrate; that span reads EH. Residue Ser298 is the site of GPI-anchor amidated serine attachment. Positions 299–313 are excised as a propeptide; the sequence is SSREITEAAVLLFYR.

As to quaternary structure, homotrimer; disulfide-linked. May interact with LTF. Post-translationally, N-glycosylated. Highly expressed in omental adipose tissue where it is found in stromal vascular cells but not in fat cells but is barely detectable in subcutaneous adipose tissue (at protein level). Highly expressed in the small intestine. Also found in the heart, testis, colon, salivary gland, skeletal muscle, pancreas and thyroid and, to a lesser degree, in the uterus, spleen, prostate, lymph node and thymus.

It localises to the cell membrane. The protein localises to the secreted. Lectin that specifically recognizes microbial carbohydrate chains in a calcium-dependent manner. Binds to microbial glycans that contain a terminal acyclic 1,2-diol moiety, including beta-linked D-galactofuranose (beta-Galf), D-phosphoglycerol-modified glycans, D-glycero-D-talo-oct-2-ulosonic acid (KO) and 3-deoxy-D-manno-oct-2-ulosonic acid (KDO). Binds to glycans from Gram-positive and Gram-negative bacteria, including K.pneumoniae, S.pneumoniae, Y.pestis, P.mirabilis and P.vulgaris. Does not bind human glycans. Probably plays a role in the defense system against microorganisms. May function as adipokine that has no effect on basal glucose uptake but enhances insulin-stimulated glucose uptake in adipocytes. Increases AKT phosphorylation in the absence and presence of insulin. May interact with lactoferrin/LTF and increase its uptake, and may thereby play a role in iron absorption. The sequence is that of Intelectin-1 (ITLN1) from Homo sapiens (Human).